Consider the following 575-residue polypeptide: Serine/threonine-protein kinase STY46 (575 aa).

A disordered region spans residues 116-140; it reads ADLDSTSNDAGHSSPTRKSIHPPPA. The span at 118–132 shows a compositional bias: polar residues; sequence LDSTSNDAGHSSPTR. Positions 178-252 constitute an ACT domain; sequence EITFSTEDKP…AKIELQSQSW (75 aa). One can recognise a Protein kinase domain in the interval 290-543; that stretch reads LKFGHKIASG…EIIEQLQEIA (254 aa). ATP contacts are provided by residues 296-304 and Lys-317; that span reads IASGSYGDL. The active-site Proton acceptor is the Asp-411. At Thr-443 the chain carries Phosphothreonine.

The protein belongs to the protein kinase superfamily. Ser/Thr protein kinase family. In terms of processing, autophosphorylated on serine and threonine residues. Autophosphorylated at Thr-443.

It localises to the cytoplasm. Its subcellular location is the cytosol. It carries out the reaction L-seryl-[protein] + ATP = O-phospho-L-seryl-[protein] + ADP + H(+). The enzyme catalyses L-threonyl-[protein] + ATP = O-phospho-L-threonyl-[protein] + ADP + H(+). Activated by autophosphorylation at Thr-443. Functionally, serine/threonine protein kinase that specifically phosphorylates chloroplast precursor proteins in the cytosol within the cleavable presequences (transit peptides). May be part of a cytosolic regulatory network involved in chloroplast protein import. Does not phosphorylate mitochondrion precursor proteins. Specific for ATP and does not utilize other NTPs. Plays a role in chloroplast biogenesis and differentiation in cotyledons, possibly through phosphorylation of chloroplast preproteins. The protein is Serine/threonine-protein kinase STY46 of Arabidopsis thaliana (Mouse-ear cress).